Reading from the N-terminus, the 185-residue chain is Crossover junction endodeoxyribonuclease RuvC (185 aa).

Active-site residues include aspartate 7, glutamate 68, and aspartate 141. Residues aspartate 7, glutamate 68, and aspartate 141 each contribute to the Mg(2+) site.

It belongs to the RuvC family. As to quaternary structure, homodimer which binds Holliday junction (HJ) DNA. The HJ becomes 2-fold symmetrical on binding to RuvC with unstacked arms; it has a different conformation from HJ DNA in complex with RuvA. In the full resolvosome a probable DNA-RuvA(4)-RuvB(12)-RuvC(2) complex forms which resolves the HJ. Requires Mg(2+) as cofactor.

The protein resides in the cytoplasm. The catalysed reaction is Endonucleolytic cleavage at a junction such as a reciprocal single-stranded crossover between two homologous DNA duplexes (Holliday junction).. Its function is as follows. The RuvA-RuvB-RuvC complex processes Holliday junction (HJ) DNA during genetic recombination and DNA repair. Endonuclease that resolves HJ intermediates. Cleaves cruciform DNA by making single-stranded nicks across the HJ at symmetrical positions within the homologous arms, yielding a 5'-phosphate and a 3'-hydroxyl group; requires a central core of homology in the junction. The consensus cleavage sequence is 5'-(A/T)TT(C/G)-3'. Cleavage occurs on the 3'-side of the TT dinucleotide at the point of strand exchange. HJ branch migration catalyzed by RuvA-RuvB allows RuvC to scan DNA until it finds its consensus sequence, where it cleaves and resolves the cruciform DNA. The polypeptide is Crossover junction endodeoxyribonuclease RuvC (Mycobacterium sp. (strain MCS)).